The primary structure comprises 168 residues: ATP synthase subunit b (168 aa).

A helical transmembrane segment spans residues 11 to 31; sequence NTVLGNIIVVSGAFIILLVLL.

The protein belongs to the ATPase B chain family. F-type ATPases have 2 components, F(1) - the catalytic core - and F(0) - the membrane proton channel. F(1) has five subunits: alpha(3), beta(3), gamma(1), delta(1), epsilon(1). F(0) has three main subunits: a(1), b(2) and c(10-14). The alpha and beta chains form an alternating ring which encloses part of the gamma chain. F(1) is attached to F(0) by a central stalk formed by the gamma and epsilon chains, while a peripheral stalk is formed by the delta and b chains.

The protein resides in the cell membrane. Functionally, f(1)F(0) ATP synthase produces ATP from ADP in the presence of a proton or sodium gradient. F-type ATPases consist of two structural domains, F(1) containing the extramembraneous catalytic core and F(0) containing the membrane proton channel, linked together by a central stalk and a peripheral stalk. During catalysis, ATP synthesis in the catalytic domain of F(1) is coupled via a rotary mechanism of the central stalk subunits to proton translocation. In terms of biological role, component of the F(0) channel, it forms part of the peripheral stalk, linking F(1) to F(0). The protein is ATP synthase subunit b of Lactococcus lactis subsp. lactis (strain IL1403) (Streptococcus lactis).